A 280-amino-acid chain; its full sequence is Phosphonoacetaldehyde hydrolase (280 aa).

Aspartate 23 (nucleophile) is an active-site residue. Mg(2+) contacts are provided by aspartate 23 and alanine 25. Catalysis depends on lysine 64, which acts as the Schiff-base intermediate with substrate. Aspartate 197 is a Mg(2+) binding site.

It belongs to the HAD-like hydrolase superfamily. PhnX family. Homodimer. Requires Mg(2+) as cofactor.

The catalysed reaction is phosphonoacetaldehyde + H2O = acetaldehyde + phosphate + H(+). Functionally, involved in phosphonate degradation. The chain is Phosphonoacetaldehyde hydrolase from Bordetella avium (strain 197N).